A 41-amino-acid polypeptide reads, in one-letter code: Large ribosomal subunit protein bL36 (41 aa).

The protein belongs to the bacterial ribosomal protein bL36 family.

The sequence is that of Large ribosomal subunit protein bL36 from Rickettsia canadensis (strain McKiel).